Reading from the N-terminus, the 495-residue chain is UDP-N-acetylmuramoyl-L-alanyl-D-glutamate--2,6-diaminopimelate ligase (495 aa).

UDP-N-acetyl-alpha-D-muramoyl-L-alanyl-D-glutamate-binding positions include L27, S29, and 44–46 (HQA). 116 to 122 (GTNGKTT) contacts ATP. UDP-N-acetyl-alpha-D-muramoyl-L-alanyl-D-glutamate contacts are provided by residues N157, 158–159 (TT), S185, Q191, and R193. Residue K225 is modified to N6-carboxylysine. Residues R390, 414–417 (DNPR), G465, and E469 contribute to the meso-2,6-diaminopimelate site. The Meso-diaminopimelate recognition motif signature appears at 414-417 (DNPR).

It belongs to the MurCDEF family. MurE subfamily. It depends on Mg(2+) as a cofactor. Post-translationally, carboxylation is probably crucial for Mg(2+) binding and, consequently, for the gamma-phosphate positioning of ATP.

It localises to the cytoplasm. It carries out the reaction UDP-N-acetyl-alpha-D-muramoyl-L-alanyl-D-glutamate + meso-2,6-diaminopimelate + ATP = UDP-N-acetyl-alpha-D-muramoyl-L-alanyl-gamma-D-glutamyl-meso-2,6-diaminopimelate + ADP + phosphate + H(+). It participates in cell wall biogenesis; peptidoglycan biosynthesis. Catalyzes the addition of meso-diaminopimelic acid to the nucleotide precursor UDP-N-acetylmuramoyl-L-alanyl-D-glutamate (UMAG) in the biosynthesis of bacterial cell-wall peptidoglycan. The protein is UDP-N-acetylmuramoyl-L-alanyl-D-glutamate--2,6-diaminopimelate ligase of Salmonella choleraesuis (strain SC-B67).